The primary structure comprises 282 residues: Para-Rep C2 (282 aa).

The CRESS-DNA virus Rep endonuclease domain maps to 1–99; the sequence is MASKRWCFTL…ETLIAEIGAP (99 aa). An RCR-1 motif is present at residues 7-10; the sequence is CFTL. Positions 38 and 47 each coordinate a divalent metal cation. An RCR-2 motif is present at residues 47-49; the sequence is HLQ. Residues 56 to 77 carry the Nuclear localization signal motif; sequence KLIRLGGLKKKFGSIAHWEIAK. The For DNA cleavage activity role is filled by Tyr86. An RCR-3 motif is present at residues 86–89; it reads YCTK. The short motif at 99 to 105 is the Nuclear localization signal element; sequence PVKKGSN. An ATP-binding site is contributed by 174–182; sequence GPDGGEGKS.

This sequence belongs to the nanoviridea/circoviridae replication-associated protein family. In terms of assembly, homooligomer (Potential). Rep binds to repeated DNA motifs (iterons). The cofactor is Mg(2+). It depends on Mn(2+) as a cofactor.

It localises to the host nucleus. The catalysed reaction is ATP + H2O = ADP + phosphate + H(+). Initiates and terminates the replication only of its own subviral DNA molecule. The closed circular ssDNA genome is first converted to a superhelical dsDNA. Rep binds a specific hairpin at the genome origin of replication. Introduces an endonucleolytic nick within the intergenic region of the genome, thereby initiating the rolling circle replication (RCR). Following cleavage, binds covalently to the 5'-phosphate of DNA as a tyrosyl ester. The cleavage gives rise to a free 3'-OH that serves as a primer for the cellular DNA polymerase. The polymerase synthesizes the (+) strand DNA by rolling circle mechanism. After one round of replication, a Rep-catalyzed nucleotidyl transfer reaction releases a circular single-stranded virus genome, thereby terminating the replication. Displays origin-specific DNA cleavage, nucleotidyl transferase, ATPase and helicase activities. This is Para-Rep C2 (C2) from Milk vetch dwarf C2 alphasatellite (MVDC2A).